Here is a 100-residue protein sequence, read N- to C-terminus: Urease subunit gamma (100 aa).

It belongs to the urease gamma subunit family. Heterotrimer of UreA (gamma), UreB (beta) and UreC (alpha) subunits. Three heterotrimers associate to form the active enzyme.

It is found in the cytoplasm. The catalysed reaction is urea + 2 H2O + H(+) = hydrogencarbonate + 2 NH4(+). The protein operates within nitrogen metabolism; urea degradation; CO(2) and NH(3) from urea (urease route): step 1/1. The polypeptide is Urease subunit gamma (Rhodopseudomonas palustris (strain ATCC BAA-98 / CGA009)).